The following is a 1825-amino-acid chain: Proteasome activator complex subunit 4B (1825 aa).

HEAT repeat units lie at residues 458–502 (PEGP…LVDC), 981–1020 (NFCC…NHCG), 1162–1200 (YPLP…QLKR), 1336–1374 (DAFL…GSKH), 1618–1656 (PEQI…YNLF), and 1662–1700 (EQCV…CNFL). Residues 1632-1720 (AGSSSWHARY…EALCKTRLPK (89 aa)) form a bromodomain-like (BRDL) region.

Belongs to the BLM10 family. In terms of assembly, homodimer. Interacts with the 20S and 26S proteasomes.

The protein resides in the cytoplasm. Its subcellular location is the cytosol. It localises to the nucleus. The protein localises to the nucleus speckle. Its function is as follows. Associated component of the proteasome that specifically recognizes acetylated histones and promotes ATP- and ubiquitin-independent degradation of core histones during DNA damage response. Recognizes and binds acetylated histones via its bromodomain-like (BRDL) region and activates the proteasome by opening the gated channel for substrate entry. Binds to the core proteasome via its C-terminus, which occupies the same binding sites as the proteasomal ATPases, opening the closed structure of the proteasome via an active gating mechanism. involved in DNA damage response in somatic cells: binds to acetylated histones and promotes degradation of histones. In Danio rerio (Zebrafish), this protein is Proteasome activator complex subunit 4B (psme4b).